Here is a 435-residue protein sequence, read N- to C-terminus: Methanethiol oxidase (435 aa).

Residues 1–24 (MKKHLLAGACALAMGFAVIPGTFA) form the signal peptide.

The protein belongs to the selenium-binding protein family. In terms of assembly, homotetramer. It depends on Cu cation as a cofactor.

Its subcellular location is the periplasm. The enzyme catalyses methanethiol + O2 + H2O = hydrogen sulfide + formaldehyde + H2O2 + H(+). Its pathway is organosulfur degradation. Its activity is regulated as follows. Inhibited by EDTA but not by EGTA. Functionally, catalyzes the oxidation of methanethiol. Can also degrade ethanethiol, but not methanol, methylamine or dimethylsulfide. The polypeptide is Methanethiol oxidase (Hyphomicrobium sp).